The primary structure comprises 141 residues: Large ribosomal subunit protein uL11 (141 aa).

This sequence belongs to the universal ribosomal protein uL11 family. In terms of assembly, part of the ribosomal stalk of the 50S ribosomal subunit. Interacts with L10 and the large rRNA to form the base of the stalk. L10 forms an elongated spine to which L12 dimers bind in a sequential fashion forming a multimeric L10(L12)X complex. Post-translationally, one or more lysine residues are methylated.

Functionally, forms part of the ribosomal stalk which helps the ribosome interact with GTP-bound translation factors. The protein is Large ribosomal subunit protein uL11 of Ruegeria pomeroyi (strain ATCC 700808 / DSM 15171 / DSS-3) (Silicibacter pomeroyi).